A 422-amino-acid chain; its full sequence is Vitamin D3 receptor (422 aa).

Positions 21-96 form a DNA-binding region, nuclear receptor; that stretch reads PRICGVCGDR…IGMMKEFILT (76 aa). Residues Cys-24, Cys-27, Cys-41, Cys-44, Cys-60, Cys-66, Cys-76, and Cys-79 each coordinate Zn(2+). 2 consecutive NR C4-type zinc fingers follow at residues 24-44 and 60-84; these read CGVCGDRATGFHFNAMTCEGC and CPFNGDCRITKDNRRHCQACRLKRC. The tract at residues 97-126 is hinge; that stretch reads DEEVQRKREMIMKRKEEEALKDSLRPKLSE. The 292-residue stretch at 127-418 folds into the NR LBD domain; sequence EQQHIIAILL…LTPLVLEVFG (292 aa). Tyr-143 lines the calcitriol pocket. Positions 161 to 185 are disordered; sequence VSTGSYSPRPTLSFSGDSSSNSDLY. A compositionally biased stretch (polar residues) spans 162–172; the sequence is STGSYSPRPTL. Low complexity predominate over residues 173–182; that stretch reads SFSGDSSSNS. Ser-232 provides a ligand contact to calcitriol. Residues 241 to 259 form an interaction with coactivator LXXLL motif region; sequence KMIPGFRDLTSDDQIVLLK. Positions 269, 273, 300, and 392 each coordinate calcitriol. Positions 411–419 match the 9aaTAD motif; the sequence is PLVLEVFGN.

It belongs to the nuclear hormone receptor family. NR1 subfamily. Homodimer in the absence of bound vitamin D3. Heterodimer with RXRA after vitamin D3 binding. Interacts with MED1, NCOA1, NCOA2, NCOA3 and NCOA6 coactivators, leading to a strong increase of transcription of target genes. Interacts with the corepressor NCOR1. Interacts with SNW1. Interacts with IRX4, the interaction does not affect its transactivation activity. Interacts with CRY1. Interacts with CRY2 in a ligand-dependent manner. Ubiquitinated by UBR5, leading to its degradation: UBR5 specifically recognizes and binds ligand-bound VDR when it is not associated with coactivators (NCOAs). In presence of NCOAs, the UBR5-degron is not accessible, preventing its ubiquitination and degradation.

The protein localises to the nucleus. The protein resides in the cytoplasm. In terms of biological role, nuclear receptor for calcitriol, the active form of vitamin D3 which mediates the action of this vitamin on cells. Enters the nucleus upon vitamin D3 binding where it forms heterodimers with the retinoid X receptor/RXR. The VDR-RXR heterodimers bind to specific response elements on DNA and activate the transcription of vitamin D3-responsive target genes. Plays a central role in calcium homeostasis. Also functions as a receptor for the secondary bile acid lithocholic acid (LCA) and its metabolites. The chain is Vitamin D3 receptor (Vdr) from Mus musculus (Mouse).